Reading from the N-terminus, the 617-residue chain is Tetratricopeptide repeat protein 39B (617 aa).

TPR repeat units lie at residues 328-361 (SLIL…QEEW) and 561-594 (PFTL…YKDY).

This sequence belongs to the TTC39 family.

Functionally, regulates high density lipoprotein (HDL) cholesterol metabolism by promoting the ubiquitination and degradation of the oxysterols receptors LXR (NR1H2 and NR1H3). This Rattus norvegicus (Rat) protein is Tetratricopeptide repeat protein 39B (Ttc39b).